Reading from the N-terminus, the 518-residue chain is Cytochrome P450 3A27 (518 aa).

Residue cysteine 447 coordinates heme.

This sequence belongs to the cytochrome P450 family. Heme is required as a cofactor.

The protein localises to the endoplasmic reticulum membrane. The protein resides in the microsome membrane. The catalysed reaction is an organic molecule + reduced [NADPH--hemoprotein reductase] + O2 = an alcohol + oxidized [NADPH--hemoprotein reductase] + H2O + H(+). Functionally, cytochromes P450 are a group of heme-thiolate monooxygenases. In liver microsomes, this enzyme is involved in an NADPH-dependent electron transport pathway. It oxidizes a variety of structurally unrelated compounds, including steroids, fatty acids, and xenobiotics. This chain is Cytochrome P450 3A27 (cyp3a27), found in Oncorhynchus mykiss (Rainbow trout).